A 169-amino-acid polypeptide reads, in one-letter code: Putative phosphoesterase SERP0604 (169 aa).

Residue histidine 34 is the Proton donor of the active site. Short sequence motifs (HXTX) lie at residues 34-37 and 115-118; these read HITI and HFTI. Histidine 115 (proton acceptor) is an active-site residue.

This sequence belongs to the 2H phosphoesterase superfamily. YjcG family.

The chain is Putative phosphoesterase SERP0604 from Staphylococcus epidermidis (strain ATCC 35984 / DSM 28319 / BCRC 17069 / CCUG 31568 / BM 3577 / RP62A).